The following is a 534-amino-acid chain: Glucans biosynthesis protein D (534 aa).

The tat-type signal signal peptide spans 1–30 (MRMQRRHLLKNAAAALAALGLPALPQWALA).

Belongs to the OpgD/OpgG family. Predicted to be exported by the Tat system. The position of the signal peptide cleavage has not been experimentally proven.

The protein localises to the periplasm. It functions in the pathway glycan metabolism; osmoregulated periplasmic glucan (OPG) biosynthesis. Its function is as follows. Probably involved in the control of the structural glucose backbone of osmoregulated periplasmic glucans (OPGs). This chain is Glucans biosynthesis protein D, found in Xanthomonas oryzae pv. oryzae (strain PXO99A).